A 237-amino-acid chain; its full sequence is DNA replication inhibitor toxin SocB (237 aa).

As to quaternary structure, interacts with cognate antitoxin SocA and with beta sliding clamp (dnaN). Degraded by ClpXP, recognition of SocB by ClpX requires SocA.

The protein resides in the cytoplasm. Toxic component of an atypical type II toxin-antitoxin (TA) system. Upon overexpression in the absence of its cognate antitoxin SocA, leads to inhibition of colony formation, cellular filamentation, incomplete DNA replication and induction of the SOS response. Exercises toxicity by binding the beta sliding clamp (dnaN), blocking DNA replication and leading to premature replication fork collapse and incomplete cell division. Unlike most type II TA systems, the SocB toxin is unstable and targeted by its cognate antitoxin SocA for degradation by ClpXP. Not toxic upon expression in E.coli. This is DNA replication inhibitor toxin SocB from Caulobacter vibrioides (strain NA1000 / CB15N) (Caulobacter crescentus).